The primary structure comprises 341 residues: MSLPAKTLVQAAANSGLRAVSVRHSSQAPKVALLGAAGGIGQPLGLLLKQDPLVAHLALYDVVNTPGVAADLSHIDSNAKVTAHTGPKELYAAVENADVIVIPAGVPRKPGMTRDDLFNTNAGIVRDLAAVIAKASPKALIAIITNPVNSTVPIASEVLKKAGVYDPKRVFGVTTLDVVRSQAFVSELKGHDASKTVVPVVGGHAGITIIPLLSQVKPSTKFSEEEISKLTPRIQDAGTEVVNAKAGAGSATLSMALAGARFANALVRGIKGEKNVQCAYVASDAVKGVEYFSTPVELGPNGVEKILGVGKVSAYEQKLIDASVPELNKNIAKGVAFVKGN.

NAD(+) contacts are provided by residues 35-41 (GAAGGIG) and Asp-61. Substrate is bound by residues Arg-108 and Arg-114. Residues Asn-121 and 144 to 146 (ITN) contribute to the NAD(+) site. Substrate-binding residues include Asn-146 and Arg-180. His-204 functions as the Proton acceptor in the catalytic mechanism. Residue Met-255 participates in NAD(+) binding.

It belongs to the LDH/MDH superfamily. MDH type 1 family. In terms of assembly, homodimer.

Its subcellular location is the mitochondrion matrix. The enzyme catalyses (S)-malate + NAD(+) = oxaloacetate + NADH + H(+). Catalyzes the reversible conversion of (S)-malate to oxaloacetate in the citric acid cycle. The sequence is that of Malate dehydrogenase, mitochondrial from Caenorhabditis elegans.